Reading from the N-terminus, the 218-residue chain is Glutathione S-transferase U24 (218 aa).

Positions 3 to 82 constitute a GST N-terminal domain; that stretch reads DEVILLDFWA…YIDETWPDNN (80 aa). Glutathione contacts are provided by residues 13 to 14, 39 to 40, 53 to 54, and 66 to 67; these read SM, NK, KI, and ES. Residues 88–215 form the GST C-terminal domain; the sequence is DPYKRAHAKF…TFISERRKKL (128 aa). Thr-148 carries the phosphothreonine modification.

It belongs to the GST superfamily. Tau family.

It localises to the cytoplasm. Its subcellular location is the cytosol. It catalyses the reaction RX + glutathione = an S-substituted glutathione + a halide anion + H(+). May be involved in the conjugation of reduced glutathione to a wide number of exogenous and endogenous hydrophobic electrophiles and have a detoxification role against certain herbicides. The protein is Glutathione S-transferase U24 (GSTU24) of Arabidopsis thaliana (Mouse-ear cress).